An 807-amino-acid chain; its full sequence is MSKQDSLWFKSLRWIQKKLVHTIVVPQDPFADLNLDSDRPLVYVMKTESISDIAALSEVTDRLGLPSPYQPLDVEGEQAPRVVCVEGAKPLLGEREGNEFYLESFSRLLSAHKKHPELDIQLVPVSLYWGRTPGKEDDSMKAAVLERESPTWLRKCLMIIFLGRHNFVQFSNAMSLRYMADEHGTDKRIAQKLARVARVHFSRQRKVMTGPVLPNRQNLFHALLKSESMKKAILEEAQSKKISEAKARETAMEYLDEIAADYSDSLVRIAERFLTWLWNKLYKGINIKGAEQIRQLHHDGHEIVYVPCHRSHMDYLLLSYILYYQGMVPPHIAAGINLNFWPAGPMFRRGGAFFIRRSFRGNKLYTAVFREYLDQLFAKGYSVEYFTEGGRSRTGRLLAPKTGMIAMTLNSVLRGVERPVTLVPVYLGYDHVMEVATYHKELSGKKKQKESVWQVFGAIRKLGNFGQGYVNFGEPITLHSYLNEQVPEWREELAQDPEQKPSWLTPVVNTLANRVMTRINDAAAVSSITLTSLVLLASEQNALQRSQLEKQLDLYLSLLKSVPYTGYTSVVEGDGAKLIAQGLELKKLKLDSDPLGDIISIDESLAIAMTYYRNNIIHLLVIPSLIASCLTRQDECSRDEIIATVKDFYPLLQAELFMGIDNLETYVNQLLDQLLAEGLIDEDKHFSVKPDGLNQLLLLAGTISETMQRYAIIFNLLAASPKIERSELESDSHQLAQRLGALHGITAPEFYDKKLYGTLSVKLKELGYLADDSHSEDVQRIRTRANSLLRSSVRQTIVDSVAAEHQA.

Residues 308–313 carry the HXXXXD motif motif; it reads CHRSHM.

This sequence belongs to the GPAT/DAPAT family.

Its subcellular location is the cell inner membrane. The catalysed reaction is sn-glycerol 3-phosphate + an acyl-CoA = a 1-acyl-sn-glycero-3-phosphate + CoA. The protein operates within phospholipid metabolism; CDP-diacylglycerol biosynthesis; CDP-diacylglycerol from sn-glycerol 3-phosphate: step 1/3. This chain is Glycerol-3-phosphate acyltransferase, found in Shewanella loihica (strain ATCC BAA-1088 / PV-4).